A 343-amino-acid polypeptide reads, in one-letter code: Uroporphyrinogen decarboxylase (343 aa).

Residues 25–29 (RQAGR), Asp75, Tyr152, Ser207, and His323 each bind substrate.

This sequence belongs to the uroporphyrinogen decarboxylase family. As to quaternary structure, homodimer.

The protein resides in the cytoplasm. It carries out the reaction uroporphyrinogen III + 4 H(+) = coproporphyrinogen III + 4 CO2. It participates in porphyrin-containing compound metabolism; protoporphyrin-IX biosynthesis; coproporphyrinogen-III from 5-aminolevulinate: step 4/4. Catalyzes the decarboxylation of four acetate groups of uroporphyrinogen-III to yield coproporphyrinogen-III. This is Uroporphyrinogen decarboxylase from Jannaschia sp. (strain CCS1).